Consider the following 447-residue polypeptide: DNA primase DnaG (447 aa).

One can recognise a Toprim domain in the interval aspartate 200 to glutamate 274. Mg(2+) is bound by residues glutamate 206, aspartate 248, and aspartate 250.

It belongs to the archaeal DnaG primase family. As to quaternary structure, forms a ternary complex with MCM helicase and DNA. Component of the archaeal exosome complex. The cofactor is Mg(2+).

It carries out the reaction ssDNA + n NTP = ssDNA/pppN(pN)n-1 hybrid + (n-1) diphosphate.. RNA polymerase that catalyzes the synthesis of short RNA molecules used as primers for DNA polymerase during DNA replication. Also part of the exosome, which is a complex involved in RNA degradation. Acts as a poly(A)-binding protein that enhances the interaction between heteromeric, adenine-rich transcripts and the exosome. The protein is DNA primase DnaG of Pyrococcus abyssi (strain GE5 / Orsay).